The primary structure comprises 349 residues: Hydroxymethylglutaryl-CoA synthase (349 aa).

(3S)-3-hydroxy-3-methylglutaryl-CoA-binding residues include Asp30 and Ala31. The Proton donor/acceptor role is filled by Glu82. (3S)-3-hydroxy-3-methylglutaryl-CoA-binding residues include Cys114 and Thr155. The active-site Acyl-thioester intermediate is Cys114. CoA is bound at residue Arg203. (3S)-3-hydroxy-3-methylglutaryl-CoA contacts are provided by Thr205 and His238. His238 serves as the catalytic Proton donor/acceptor. Position 243 (Lys243) interacts with CoA. Asn270 and Ser300 together coordinate (3S)-3-hydroxy-3-methylglutaryl-CoA.

It belongs to the thiolase-like superfamily. Archaeal HMG-CoA synthase family. Interacts with acetoacetyl-CoA thiolase that catalyzes the precedent step in the pathway and with a DUF35 protein. The acetoacetyl-CoA thiolase/HMG-CoA synthase complex channels the intermediate via a fused CoA-binding site, which allows for efficient coupling of the endergonic thiolase reaction with the exergonic HMGCS reaction.

The catalysed reaction is acetoacetyl-CoA + acetyl-CoA + H2O = (3S)-3-hydroxy-3-methylglutaryl-CoA + CoA + H(+). It participates in metabolic intermediate biosynthesis; (R)-mevalonate biosynthesis; (R)-mevalonate from acetyl-CoA: step 2/3. Catalyzes the condensation of acetyl-CoA with acetoacetyl-CoA to form 3-hydroxy-3-methylglutaryl-CoA (HMG-CoA). Functions in the mevalonate (MVA) pathway leading to isopentenyl diphosphate (IPP), a key precursor for the biosynthesis of isoprenoid compounds that are building blocks of archaeal membrane lipids. The sequence is that of Hydroxymethylglutaryl-CoA synthase from Methanococcus maripaludis (strain C6 / ATCC BAA-1332).